The following is a 192-amino-acid chain: MDGSGEQPRGGGPTSSEQIMKTGALLLQGFIQDRAGRMGGEAPELALDPVPQDASTKKLSECLKRIGDELDSNMELQRMIAAVDTDSPREVFFRVAADMFSDGNFNWGRVVALFYFASKLVLKALCTKVPELIRTIMGWTLDFLRERLLGWIQDQGGWDGLLSYFGTPTWQTVTIFVAGVLTASLTIWKKMG.

N-acetylmethionine is present on M1. A BH3 motif is present at residues 59–73 (LSECLKRIGDELDSN). The BH1 signature appears at 98 to 118 (DMFSDGNFNWGRVVALFYFAS). K128 is covalently cross-linked (Glycyl lysine isopeptide (Lys-Gly) (interchain with G-Cter in ubiquitin)). Positions 150–165 (GWIQDQGGWDGLLSYF) match the BH2 motif. The helical transmembrane segment at 172–192 (TVTIFVAGVLTASLTIWKKMG) threads the bilayer. A Glycyl lysine isopeptide (Lys-Gly) (interchain with G-Cter in ubiquitin) cross-link involves residue K190.

It belongs to the Bcl-2 family. Homodimer. Forms higher oligomers under stress conditions. Forms heterooligomers with BAK. Interacts with BCL2L11. Interaction with BCL2L11 promotes BAX oligomerization and association with mitochondrial membranes, with subsequent release of cytochrome c. Forms heterodimers with BCL2, BCL2L1 isoform Bcl-X(L), BCL2L2, MCL1 and A1. Interacts with SH3GLB1. Interacts with humanin; forms fibers with humanin which results in BAX conformational changes and sequestering of BAX into the fibers, preventing BAX activation. Interacts with SFN and YWHAZ; the interaction occurs in the cytoplasm. Under stress conditions, JNK-mediated phosphorylation of SFN and YWHAZ, releases BAX to mitochondria. Interacts with RNF144B, which regulates the ubiquitin-dependent stability of BAX. Interacts with CLU under stress conditions that cause a conformation change leading to BAX oligomerization and association with mitochondria. Does not interact with CLU in unstressed cells. Interacts with FAIM2/LFG2. Interacts with RTL10/BOP. Interacts (via a C-terminal 33 residues) with NOL3 (via CARD domain); inhibits BAX activation and translocation and consequently cytochrome c release from mitochondria. Interacts with GIMAP3/IAN4 and GIMAP5/IAN5; this interaction is increased, when cells initiate apoptosis upon IL2 withdrawal. Interacts with IRF3; the interaction is direct, increases upon Sendai virus infection and mediates the formation of the apoptosis complex TOMM70:HSP90AA1:IRF3:BAX. Interacts with MOAP1, facilitating BAX-dependent mitochondrial outer membrane permeabilization and apoptosis. Interacts with BCL2L10/BCL-B. Interacts with non-acetylated XRCC6/Ku70; this interaction leads to BAX sequestration in the cytosol, away from the mitochondria, preventing BAX-mediated apoptosis. As to quaternary structure, interacts with BCL2A1 and BCL2L1 isoform Bcl-X(L). In terms of assembly, (Microbial infection) Interacts with adenovirus E1B 19K protein; this interaction blocks BAX oligomerization. (Microbial infection) Interacts with human cytomegalovirus/HHV-5 protein vMIA/UL37. As to quaternary structure, (Microbial infection) Interacts with enterovirus protein 2B; this interaction activates BAX-induced apoptosis. Post-translationally, ubiquitinated in the absence of XRCC6/Ku70. Ubiquitination promotes protein degradation. Ubiquitinated on Lys-128 and Lys-190. 'Lys-63'-linked polyubiquitin chains on Lys-128 are removed by USP12. Expressed in a wide variety of tissues. Isoform Psi is found in glial tumors. Isoform Alpha is expressed in spleen, breast, ovary, testis, colon and brain, and at low levels in skin and lung. Isoform Sigma is expressed in spleen, breast, ovary, testis, lung, colon, brain and at low levels in skin. Isoform Alpha and isoform Sigma are expressed in pro-myelocytic leukemia, histiocytic lymphoma, Burkitt's lymphoma, T-cell lymphoma, lymphoblastic leukemia, breast adenocarcinoma, ovary adenocarcinoma, prostate carcinoma, prostate adenocarcinoma, lung carcinoma, epidermoid carcinoma, small cell lung carcinoma and colon adenocarcinoma cell lines.

The protein localises to the mitochondrion outer membrane. The protein resides in the cytoplasm. Its subcellular location is the nucleus. Plays a role in the mitochondrial apoptotic process. Under normal conditions, BAX is largely cytosolic via constant retrotranslocation from mitochondria to the cytosol mediated by BCL2L1/Bcl-xL, which avoids accumulation of toxic BAX levels at the mitochondrial outer membrane (MOM). Under stress conditions, undergoes a conformation change that causes translocation to the mitochondrion membrane, leading to the release of cytochrome c that then triggers apoptosis. Promotes activation of CASP3, and thereby apoptosis. The protein is Apoptosis regulator BAX (BAX) of Homo sapiens (Human).